A 346-amino-acid chain; its full sequence is Probable dual-specificity RNA methyltransferase RlmN (346 aa).

Catalysis depends on E92, which acts as the Proton acceptor. In terms of domain architecture, Radical SAM core spans 98 to 332; it reads TDQRLTVCVS…VSLRASRGLD (235 aa). C105 and C337 are disulfide-bonded. [4Fe-4S] cluster-binding residues include C112, C116, and C119. Residues 159 to 160, S189, 218 to 220, and N294 contribute to the S-adenosyl-L-methionine site; these read GE and SLH. Residue C337 is the S-methylcysteine intermediate of the active site.

Belongs to the radical SAM superfamily. RlmN family. [4Fe-4S] cluster serves as cofactor.

It localises to the cytoplasm. It catalyses the reaction adenosine(2503) in 23S rRNA + 2 reduced [2Fe-2S]-[ferredoxin] + 2 S-adenosyl-L-methionine = 2-methyladenosine(2503) in 23S rRNA + 5'-deoxyadenosine + L-methionine + 2 oxidized [2Fe-2S]-[ferredoxin] + S-adenosyl-L-homocysteine. It carries out the reaction adenosine(37) in tRNA + 2 reduced [2Fe-2S]-[ferredoxin] + 2 S-adenosyl-L-methionine = 2-methyladenosine(37) in tRNA + 5'-deoxyadenosine + L-methionine + 2 oxidized [2Fe-2S]-[ferredoxin] + S-adenosyl-L-homocysteine. Its function is as follows. Specifically methylates position 2 of adenine 2503 in 23S rRNA and position 2 of adenine 37 in tRNAs. The sequence is that of Probable dual-specificity RNA methyltransferase RlmN from Synechococcus sp. (strain CC9311).